The following is a 249-amino-acid chain: Uridylate kinase (249 aa).

22-25 (KISG) is a binding site for ATP. The involved in allosteric activation by GTP stretch occupies residues 30–35 (GTQGFG). UMP is bound at residue G64. 2 residues coordinate ATP: G65 and R69. UMP-binding positions include D84 and 145-152 (TGNPYFTT). ATP-binding residues include N173, Y179, and D182.

This sequence belongs to the UMP kinase family. As to quaternary structure, homohexamer.

The protein resides in the cytoplasm. The enzyme catalyses UMP + ATP = UDP + ADP. It functions in the pathway pyrimidine metabolism; CTP biosynthesis via de novo pathway; UDP from UMP (UMPK route): step 1/1. Allosterically activated by GTP. Inhibited by UTP. Catalyzes the reversible phosphorylation of UMP to UDP. This is Uridylate kinase from Ruegeria sp. (strain TM1040) (Silicibacter sp.).